Here is a 121-residue protein sequence, read N- to C-terminus: Large ribosomal subunit protein uL22 (121 aa).

The protein belongs to the universal ribosomal protein uL22 family. Part of the 50S ribosomal subunit.

Its function is as follows. This protein binds specifically to 23S rRNA; its binding is stimulated by other ribosomal proteins, e.g. L4, L17, and L20. It is important during the early stages of 50S assembly. It makes multiple contacts with different domains of the 23S rRNA in the assembled 50S subunit and ribosome. Functionally, the globular domain of the protein is located near the polypeptide exit tunnel on the outside of the subunit, while an extended beta-hairpin is found that lines the wall of the exit tunnel in the center of the 70S ribosome. The protein is Large ribosomal subunit protein uL22 of Paenarthrobacter aurescens (strain TC1).